A 266-amino-acid polypeptide reads, in one-letter code: Ribosomal RNA small subunit methyltransferase A (266 aa).

Asn12, Leu14, Gly39, Glu61, Asp87, and Asn107 together coordinate S-adenosyl-L-methionine.

This sequence belongs to the class I-like SAM-binding methyltransferase superfamily. rRNA adenine N(6)-methyltransferase family. RsmA subfamily.

It localises to the cytoplasm. The catalysed reaction is adenosine(1518)/adenosine(1519) in 16S rRNA + 4 S-adenosyl-L-methionine = N(6)-dimethyladenosine(1518)/N(6)-dimethyladenosine(1519) in 16S rRNA + 4 S-adenosyl-L-homocysteine + 4 H(+). Its function is as follows. Specifically dimethylates two adjacent adenosines (A1518 and A1519) in the loop of a conserved hairpin near the 3'-end of 16S rRNA in the 30S particle. May play a critical role in biogenesis of 30S subunits. The polypeptide is Ribosomal RNA small subunit methyltransferase A (Nitratidesulfovibrio vulgaris (strain DP4) (Desulfovibrio vulgaris)).